The primary structure comprises 314 residues: NF-kappa-B inhibitor alpha (314 aa).

The tract at residues 1–40 is disordered; it reads MFQPAGHGQDWAMEGPRDGLKKERLVDDRHDSGLDSMKDE. Over residues 15-40 the composition is skewed to basic and acidic residues; it reads GPRDGLKKERLVDDRHDSGLDSMKDE. Lysine 21 participates in a covalent cross-link: Glycyl lysine isopeptide (Lys-Gly) (interchain with G-Cter in SUMO); alternate. A Glycyl lysine isopeptide (Lys-Gly) (interchain with G-Cter in ubiquitin); alternate cross-link involves residue lysine 21. Lysine 22 participates in a covalent cross-link: Glycyl lysine isopeptide (Lys-Gly) (interchain with G-Cter in ubiquitin). The Destruction motif motif lies at 30–36; sequence HDSGLDS. Position 32 is a phosphoserine; by IKKB (serine 32). Serine 36 bears the Phosphoserine; by IKKA, IKKB, IKKE and TBK1 mark. At tyrosine 42 the chain carries Phosphotyrosine. Residues 45 to 54 carry the Nuclear export signal motif; sequence MVKELREIRL. 5 ANK repeats span residues 73–103, 110–139, 143–172, 182–211, and 216–245; these read DGDS…DLAF, LQQT…DPEL, RGNT…PQHL, NGHT…DVNA, and NGRT…DVNR. The short motif at 110–120 is the Nuclear import signal element; the sequence is LQQTPLHLAVI. Residues asparagine 210 and asparagine 244 each carry the (3S)-3-hydroxyasparagine; by HIF1AN modification. Phosphoserine; by CK2 is present on residues serine 283 and serine 288. At threonine 291 the chain carries Phosphothreonine; by CK2. Phosphoserine; by CK2 is present on serine 293. Threonine 296 bears the Phosphothreonine mark.

The protein belongs to the NF-kappa-B inhibitor family. In terms of assembly, interacts with RELA; the interaction requires the nuclear import signal. Part of a 70-90 kDa complex at least consisting of CHUK, IKBKB, NFKBIA, RELA, ELP1 and MAP3K14. Interacts with NKIRAS1 and NKIRAS2. Interacts with RWDD3; the interaction enhances sumoylation. Interacts with PRMT2. Interacts with PRKACA in platelets; this interaction is disrupted by thrombin and collagen. Interacts with MEFV. Interacts with DDRGK1; positively regulates NFKBIA phosphorylation and degradation. Interacts with HNRNPA2B1; the interaction may be mediated by the RRM2 domain of HNRNPA2B1, and HNRNPA2B1 may interact simultaneously with FAM76B and either NFKBIA or NFKBIE to form a complex. In terms of processing, phosphorylated at Ser-32 and Ser-36 by IKKA/CHUK and IKKB/IKBKB; disables inhibition of NF-kappa-B DNA-binding activity. Phosphorylation at positions 32 and 36 is prerequisite to recognition by the SCF(FBXW11) and SCF(BTRC) complexes, leading to polyubiquitination and subsequent degradation. Post-translationally, polyubiquitinated at Lys-21 and/or Lys-22 following phosphorylation at Ser-32 and Ser-36. Monoubiquitinated at Lys-21 and/or Lys-22 by UBE2D3. Ubiquitin chain elongation is then performed by CDC34 in cooperation with the SCF(FBXW11) E3 ligase complex, building ubiquitin chains from the UBE2D3-primed NFKBIA-linked ubiquitin. The resulting polyubiquitination leads to protein degradation. Also ubiquitinated by the SCF(BTRC) complex following stimulus-dependent phosphorylation at Ser-32 and Ser-36. Deubiquitinated by USP38, leading to NF-kappa-B inhibition. Sumoylated; sumoylation requires the presence of the nuclear import signal. Sumoylation blocks ubiquitination and proteasome-mediated degradation of the protein thereby increasing the protein stability. In terms of processing, hydroxylated by HIF1AN. In terms of tissue distribution, highly expressed in lymph node, thymus followed by liver, brain, muscle, kidney, gastrointestinal and reproductive tract.

The protein resides in the cytoplasm. The protein localises to the nucleus. In terms of biological role, inhibits the activity of dimeric NF-kappa-B/REL complexes by trapping REL (RELA/p65 and NFKB1/p50) dimers in the cytoplasm by masking their nuclear localization signals. On cellular stimulation by immune and pro-inflammatory responses, becomes phosphorylated promoting ubiquitination and degradation, enabling the dimeric RELA to translocate to the nucleus and activate transcription. The polypeptide is NF-kappa-B inhibitor alpha (Nfkbia) (Mus musculus (Mouse)).